The following is a 489-amino-acid chain: Amino acid transporter AVT6E (489 aa).

11 helical membrane passes run 76-96, 102-122, 156-176, 201-221, 227-247, 269-289, 310-330, 357-377, 404-424, 425-445, and 461-481; these read GIYG…IMAL, VLGL…SEIS, ICII…MGDV, VLIL…NKID, SAAS…VATI, ILDL…HFNV, ITTA…YLLF, IVRI…HFSL, VVLL…WTAF, KFTG…LIAL, and VSWL…IGNI.

The protein belongs to the amino acid/polyamine transporter 2 family. Amino acid/auxin permease (AAAP) (TC 2.A.18.6) subfamily.

Its subcellular location is the endoplasmic reticulum membrane. The protein localises to the vacuole membrane. This is Amino acid transporter AVT6E from Arabidopsis thaliana (Mouse-ear cress).